An 89-amino-acid chain; its full sequence is Small ribosomal subunit protein uS15 (89 aa).

The protein belongs to the universal ribosomal protein uS15 family. Part of the 30S ribosomal subunit. Forms a bridge to the 50S subunit in the 70S ribosome, contacting the 23S rRNA.

One of the primary rRNA binding proteins, it binds directly to 16S rRNA where it helps nucleate assembly of the platform of the 30S subunit by binding and bridging several RNA helices of the 16S rRNA. In terms of biological role, forms an intersubunit bridge (bridge B4) with the 23S rRNA of the 50S subunit in the ribosome. The polypeptide is Small ribosomal subunit protein uS15 (Vibrio parahaemolyticus serotype O3:K6 (strain RIMD 2210633)).